A 412-amino-acid polypeptide reads, in one-letter code: Phosphoglycerate kinase, plasmid (412 aa).

Substrate-binding positions include 39–41 (DLN), Arg-55, 78–81 (HLGR), Arg-133, and Arg-166. Residues Lys-217, Glu-339, and 365–368 (GGDT) each bind ATP.

Belongs to the phosphoglycerate kinase family. Monomer.

The protein localises to the cytoplasm. It catalyses the reaction (2R)-3-phosphoglycerate + ATP = (2R)-3-phospho-glyceroyl phosphate + ADP. It participates in carbohydrate biosynthesis; Calvin cycle. This Cupriavidus necator (strain ATCC 17699 / DSM 428 / KCTC 22496 / NCIMB 10442 / H16 / Stanier 337) (Ralstonia eutropha) protein is Phosphoglycerate kinase, plasmid (cbbKP).